A 273-amino-acid polypeptide reads, in one-letter code: Undecaprenyl-diphosphatase (273 aa).

7 consecutive transmembrane segments (helical) span residues 6 to 26, 45 to 65, 90 to 110, 116 to 136, 190 to 210, 222 to 242, and 252 to 272; these read SLLV…LPVS, AKTF…VMFW, LTLI…LLFH, LFNP…LIAA, YAAS…ATAL, GDIP…LVAI, and ISFI…YVVF.

It belongs to the UppP family.

The protein resides in the cell inner membrane. The enzyme catalyses di-trans,octa-cis-undecaprenyl diphosphate + H2O = di-trans,octa-cis-undecaprenyl phosphate + phosphate + H(+). In terms of biological role, catalyzes the dephosphorylation of undecaprenyl diphosphate (UPP). Confers resistance to bacitracin. The polypeptide is Undecaprenyl-diphosphatase (Escherichia fergusonii (strain ATCC 35469 / DSM 13698 / CCUG 18766 / IAM 14443 / JCM 21226 / LMG 7866 / NBRC 102419 / NCTC 12128 / CDC 0568-73)).